The primary structure comprises 104 residues: uncharacterized protein (104 aa).

This is an uncharacterized protein from Methanocaldococcus jannaschii (strain ATCC 43067 / DSM 2661 / JAL-1 / JCM 10045 / NBRC 100440) (Methanococcus jannaschii).